Reading from the N-terminus, the 388-residue chain is S-adenosylmethionine synthase (388 aa).

ATP is bound at residue H17. D19 lines the Mg(2+) pocket. A K(+)-binding site is contributed by E45. Positions 58 and 102 each coordinate L-methionine. The flexible loop stretch occupies residues 102–112; the sequence is QSADIAQGVDA. ATP-binding positions include 167–169, 232–233, D241, 247–248, A264, and K268; these read DSK, RF, and RK. An L-methionine-binding site is contributed by D241. K272 is a binding site for L-methionine.

The protein belongs to the AdoMet synthase family. As to quaternary structure, homotetramer; dimer of dimers. The cofactor is Mg(2+). K(+) is required as a cofactor.

The protein resides in the cytoplasm. It catalyses the reaction L-methionine + ATP + H2O = S-adenosyl-L-methionine + phosphate + diphosphate. Its pathway is amino-acid biosynthesis; S-adenosyl-L-methionine biosynthesis; S-adenosyl-L-methionine from L-methionine: step 1/1. Catalyzes the formation of S-adenosylmethionine (AdoMet) from methionine and ATP. The overall synthetic reaction is composed of two sequential steps, AdoMet formation and the subsequent tripolyphosphate hydrolysis which occurs prior to release of AdoMet from the enzyme. In Paramagnetospirillum magneticum (strain ATCC 700264 / AMB-1) (Magnetospirillum magneticum), this protein is S-adenosylmethionine synthase.